We begin with the raw amino-acid sequence, 67 residues long: ATP synthase F(0) complex subunit 8 (67 aa).

The chain crosses the membrane as a helical span at residues 8–24 (TWFINIVSMILTLFIVF). Lys-54 is subject to N6-acetyllysine; alternate. The residue at position 54 (Lys-54) is an N6-succinyllysine; alternate. Position 57 is an N6-acetyllysine (Lys-57).

It belongs to the ATPase protein 8 family. In terms of assembly, component of the ATP synthase complex composed at least of ATP5F1A/subunit alpha, ATP5F1B/subunit beta, ATP5MC1/subunit c (homooctomer), MT-ATP6/subunit a, MT-ATP8/subunit 8, ATP5ME/subunit e, ATP5MF/subunit f, ATP5MG/subunit g, ATP5MK/subunit k, ATP5MJ/subunit j, ATP5F1C/subunit gamma, ATP5F1D/subunit delta, ATP5F1E/subunit epsilon, ATP5PF/subunit F6, ATP5PB/subunit b, ATP5PD/subunit d, ATP5PO/subunit OSCP. ATP synthase complex consists of a soluble F(1) head domain (subunits alpha(3) and beta(3)) - the catalytic core - and a membrane F(0) domain - the membrane proton channel (subunits c, a, 8, e, f, g, k and j). These two domains are linked by a central stalk (subunits gamma, delta, and epsilon) rotating inside the F1 region and a stationary peripheral stalk (subunits F6, b, d, and OSCP). Interacts with PRICKLE3.

The protein resides in the mitochondrion membrane. In terms of biological role, subunit 8, of the mitochondrial membrane ATP synthase complex (F(1)F(0) ATP synthase or Complex V) that produces ATP from ADP in the presence of a proton gradient across the membrane which is generated by electron transport complexes of the respiratory chain. ATP synthase complex consist of a soluble F(1) head domain - the catalytic core - and a membrane F(1) domain - the membrane proton channel. These two domains are linked by a central stalk rotating inside the F(1) region and a stationary peripheral stalk. During catalysis, ATP synthesis in the catalytic domain of F(1) is coupled via a rotary mechanism of the central stalk subunits to proton translocation. In vivo, can only synthesize ATP although its ATP hydrolase activity can be activated artificially in vitro. Part of the complex F(0) domain. The polypeptide is ATP synthase F(0) complex subunit 8 (Equus caballus (Horse)).